Consider the following 236-residue polypeptide: Syntaxin-8 (236 aa).

Over 1–215 (MAPDPWFSTY…LVDRKSTSCG (215 aa)) the chain is Cytoplasmic. Residues 42–65 (LTIRTLLKNLKVKIDLLKDLLLRA) are a coiled coil. Positions 145-207 (QKIIQEQDAG…RTEARRVTLV (63 aa)) constitute a t-SNARE coiled-coil homology domain. At serine 160 the chain carries Phosphoserine. Residues 216–232 (MIMVILLLLVAIVVVAV) traverse the membrane as a helical; Anchor for type IV membrane protein segment. At 233–236 (WPTN) the chain is on the vesicular side.

This sequence belongs to the syntaxin family. As to quaternary structure, forms a SNARE complex with STX7, VTI1B and VAMP8 which functions in the homotypic fusion of late endosomes. Part of the SNARE core complex containing STX7, VAMP8 and VTI1B. Interacts with VAMP8. Interacts with HECTD3. Interacts with TPC1. Post-translationally, ubiquitinated by HECTD3.

Its subcellular location is the membrane. Vesicle trafficking protein that functions in the early secretory pathway, possibly by mediating retrograde transport from cis-Golgi membranes to the ER. The sequence is that of Syntaxin-8 (Stx8) from Mus musculus (Mouse).